A 155-amino-acid polypeptide reads, in one-letter code: DNA gyrase inhibitor (155 aa).

This sequence belongs to the DNA gyrase inhibitor family. Interacts with DNA gyrase.

The protein localises to the cytoplasm. Inhibits the supercoiling activity of DNA gyrase. Acts by inhibiting DNA gyrase at an early step, prior to (or at the step of) binding of DNA by the gyrase. It protects cells against toxins that target DNA gyrase, by inhibiting activity of these toxins and reducing the formation of lethal double-strand breaks in the cell. The chain is DNA gyrase inhibitor from Salmonella typhi.